Here is a 118-residue protein sequence, read N- to C-terminus: Vitelline membrane protein Vm32E (118 aa).

An N-terminal signal peptide occupies residues Met-1–Ala-17. Residues Gly-36 to Thr-75 enclose the VM domain.

Belongs to the vitelline membrane family.

The protein localises to the secreted. Major early eggshell protein. The protein is Vitelline membrane protein Vm32E of Drosophila sechellia (Fruit fly).